The primary structure comprises 397 residues: Phosphoglycerate kinase (397 aa).

Substrate is bound by residues 21–23 (DFN), R37, 60–63 (HLGR), R119, and R152. ATP contacts are provided by residues K203, G294, E325, and 354–357 (GGDS).

The protein belongs to the phosphoglycerate kinase family. As to quaternary structure, monomer.

It is found in the cytoplasm. It carries out the reaction (2R)-3-phosphoglycerate + ATP = (2R)-3-phospho-glyceroyl phosphate + ADP. Its pathway is carbohydrate degradation; glycolysis; pyruvate from D-glyceraldehyde 3-phosphate: step 2/5. This chain is Phosphoglycerate kinase, found in Pelodictyon phaeoclathratiforme (strain DSM 5477 / BU-1).